The chain runs to 633 residues: 1-deoxy-D-xylulose-5-phosphate synthase (633 aa).

A disordered region spans residues Met-1–Gln-22. Residues His-87 and Gly-128–Ser-130 each bind thiamine diphosphate. Position 159 (Asp-159) interacts with Mg(2+). Thiamine diphosphate is bound by residues Gly-160 to Ala-161, Asn-188, Phe-295, and Glu-378. Residue Asn-188 coordinates Mg(2+).

The protein belongs to the transketolase family. DXPS subfamily. Homodimer. Requires Mg(2+) as cofactor. Thiamine diphosphate is required as a cofactor.

It catalyses the reaction D-glyceraldehyde 3-phosphate + pyruvate + H(+) = 1-deoxy-D-xylulose 5-phosphate + CO2. Its pathway is metabolic intermediate biosynthesis; 1-deoxy-D-xylulose 5-phosphate biosynthesis; 1-deoxy-D-xylulose 5-phosphate from D-glyceraldehyde 3-phosphate and pyruvate: step 1/1. Functionally, catalyzes the acyloin condensation reaction between C atoms 2 and 3 of pyruvate and glyceraldehyde 3-phosphate to yield 1-deoxy-D-xylulose-5-phosphate (DXP). The chain is 1-deoxy-D-xylulose-5-phosphate synthase from Pseudomonas fluorescens (strain ATCC BAA-477 / NRRL B-23932 / Pf-5).